The sequence spans 36 residues: Trypsin inhibitor 2 (36 aa).

3 disulfides stabilise this stretch: C3–C20, C10–C24, and C19–C35.

In terms of biological role, trypsin inhibitor. The protein is Trypsin inhibitor 2 of Spinacia oleracea (Spinach).